Reading from the N-terminus, the 549-residue chain is Cytoplasmic trehalase (549 aa).

Residues Arg168, 175-176, Asn212, 221-223, 292-294, and Gly324 contribute to the substrate site; these read WD, RSQ, and RDE. Active-site proton donor/acceptor residues include Asp326 and Glu509. Glu525 contacts substrate.

Belongs to the glycosyl hydrolase 37 family. As to quaternary structure, monomer.

It localises to the cytoplasm. The enzyme catalyses alpha,alpha-trehalose + H2O = alpha-D-glucose + beta-D-glucose. The protein operates within glycan degradation; trehalose degradation; D-glucose from alpha,alpha-trehalose: step 1/1. Its function is as follows. Hydrolyzes trehalose to glucose. Could be involved, in cells returning to low osmolarity conditions, in the utilization of the accumulated cytoplasmic trehalose, which was synthesized in response to high osmolarity. This Escherichia coli O157:H7 protein is Cytoplasmic trehalase.